Consider the following 122-residue polypeptide: Large ribosomal subunit protein uL14 (122 aa).

Belongs to the universal ribosomal protein uL14 family. As to quaternary structure, part of the 50S ribosomal subunit. Forms a cluster with proteins L3 and L19. In the 70S ribosome, L14 and L19 interact and together make contacts with the 16S rRNA in bridges B5 and B8.

Binds to 23S rRNA. Forms part of two intersubunit bridges in the 70S ribosome. This Nitrosospira multiformis (strain ATCC 25196 / NCIMB 11849 / C 71) protein is Large ribosomal subunit protein uL14.